We begin with the raw amino-acid sequence, 88 residues long: Large ribosomal subunit protein bL27 (88 aa).

A disordered region spans residues 1 to 24 (MATKKSGGSSGNGRDSRGRRLGVK).

It belongs to the bacterial ribosomal protein bL27 family.

In Ehrlichia canis (strain Jake), this protein is Large ribosomal subunit protein bL27.